A 157-amino-acid chain; its full sequence is Transcriptional repressor NrdR (157 aa).

A zinc finger lies at 3–34 (CPKCNSTHSRVVDSRHADEANAIRRRRECENC). In terms of domain architecture, ATP-cone spans 49–139 (LIVVKKDGTR…VYKEFKDVDQ (91 aa)).

It belongs to the NrdR family. Zn(2+) is required as a cofactor.

Functionally, negatively regulates transcription of bacterial ribonucleotide reductase nrd genes and operons by binding to NrdR-boxes. The chain is Transcriptional repressor NrdR from Staphylococcus carnosus (strain TM300).